A 541-amino-acid chain; its full sequence is Chaperonin GroEL (541 aa).

ATP contacts are provided by residues 29-32, 86-90, Gly413, 480-482, and Asp496; these read TLGP, DGTTT, and NAA.

Belongs to the chaperonin (HSP60) family. In terms of assembly, forms a cylinder of 14 subunits composed of two heptameric rings stacked back-to-back. Interacts with the co-chaperonin GroES.

Its subcellular location is the cytoplasm. It catalyses the reaction ATP + H2O + a folded polypeptide = ADP + phosphate + an unfolded polypeptide.. Functionally, together with its co-chaperonin GroES, plays an essential role in assisting protein folding. The GroEL-GroES system forms a nano-cage that allows encapsulation of the non-native substrate proteins and provides a physical environment optimized to promote and accelerate protein folding. This Gardnerella vaginalis protein is Chaperonin GroEL.